The primary structure comprises 277 residues: Large ribosomal subunit protein uL2 (277 aa).

Residues 219-277 (TVRGSVMNPNDHPHGGGEGRSPIGHPSPRTPWGKPALGYKTRKNKKYSDRFIVKRRHDK) are disordered.

This sequence belongs to the universal ribosomal protein uL2 family. As to quaternary structure, part of the 50S ribosomal subunit. Forms a bridge to the 30S subunit in the 70S ribosome.

One of the primary rRNA binding proteins. Required for association of the 30S and 50S subunits to form the 70S ribosome, for tRNA binding and peptide bond formation. It has been suggested to have peptidyltransferase activity; this is somewhat controversial. Makes several contacts with the 16S rRNA in the 70S ribosome. This is Large ribosomal subunit protein uL2 from Clostridium botulinum (strain Okra / Type B1).